The chain runs to 314 residues: tRNA pseudouridine synthase B (314 aa).

H43 contacts substrate. The active-site Nucleophile is the D48. Y76, Y179, and L200 together coordinate substrate.

The protein belongs to the pseudouridine synthase TruB family. Type 1 subfamily.

It catalyses the reaction uridine(55) in tRNA = pseudouridine(55) in tRNA. In terms of biological role, responsible for synthesis of pseudouridine from uracil-55 in the psi GC loop of transfer RNAs. This chain is tRNA pseudouridine synthase B, found in Serratia proteamaculans (strain 568).